The following is a 329-amino-acid chain: GTP 3',8-cyclase (329 aa).

Positions 8-234 (AFARKFFYLR…QIRQRSDGPA (227 aa)) constitute a Radical SAM core domain. R17 provides a ligand contact to GTP. 2 residues coordinate [4Fe-4S] cluster: C24 and C28. Y30 is an S-adenosyl-L-methionine binding site. Residue C31 coordinates [4Fe-4S] cluster. Residue R68 participates in GTP binding. G72 contributes to the S-adenosyl-L-methionine binding site. Residue T99 coordinates GTP. S123 lines the S-adenosyl-L-methionine pocket. K160 is a GTP binding site. M194 serves as a coordination point for S-adenosyl-L-methionine. The [4Fe-4S] cluster site is built by C257 and C260. 262 to 264 (RLR) contributes to the GTP binding site. C274 lines the [4Fe-4S] cluster pocket.

This sequence belongs to the radical SAM superfamily. MoaA family. In terms of assembly, monomer and homodimer. Requires [4Fe-4S] cluster as cofactor.

The catalysed reaction is GTP + AH2 + S-adenosyl-L-methionine = (8S)-3',8-cyclo-7,8-dihydroguanosine 5'-triphosphate + 5'-deoxyadenosine + L-methionine + A + H(+). It functions in the pathway cofactor biosynthesis; molybdopterin biosynthesis. In terms of biological role, catalyzes the cyclization of GTP to (8S)-3',8-cyclo-7,8-dihydroguanosine 5'-triphosphate. This Klebsiella pneumoniae (strain 342) protein is GTP 3',8-cyclase.